Consider the following 187-residue polypeptide: Large ribosomal subunit protein uL5 (187 aa).

Belongs to the universal ribosomal protein uL5 family. As to quaternary structure, part of the 50S ribosomal subunit; part of the 5S rRNA/L5/L18/L25 subcomplex. Contacts the 5S rRNA and the P site tRNA. Forms a bridge to the 30S subunit in the 70S ribosome.

This is one of the proteins that bind and probably mediate the attachment of the 5S RNA into the large ribosomal subunit, where it forms part of the central protuberance. In the 70S ribosome it contacts protein S13 of the 30S subunit (bridge B1b), connecting the 2 subunits; this bridge is implicated in subunit movement. Contacts the P site tRNA; the 5S rRNA and some of its associated proteins might help stabilize positioning of ribosome-bound tRNAs. The sequence is that of Large ribosomal subunit protein uL5 from Roseobacter denitrificans (strain ATCC 33942 / OCh 114) (Erythrobacter sp. (strain OCh 114)).